The primary structure comprises 882 residues: Chondroitin sulfate synthase 3 (882 aa).

The Cytoplasmic portion of the chain corresponds to 1–7 (MAVRSRR). The helical; Signal-anchor for type II membrane protein transmembrane segment at 8–28 (PWMSVALGLVLGFTAASWLIA) threads the bilayer. The Lumenal segment spans residues 29 to 882 (PRVAELSERK…LGVRYNRTLS (854 aa)). Positions 46–167 (SYYGRSAAGP…GDGGAAAPSA (122 aa)) are disordered. Low complexity-rich tracts occupy residues 59–69 (AQQPLPQPQSR) and 120–131 (GATGLPGAPAAE). N-linked (GlcNAc...) asparagine glycosylation is found at N155, N279, and N710. 2 residues coordinate a divalent metal cation: D720 and H834. N-linked (GlcNAc...) asparagine glycosylation occurs at N878.

It belongs to the chondroitin N-acetylgalactosaminyltransferase family. Requires Co(2+) as cofactor. The cofactor is Mn(2+). Cd(2+) serves as cofactor. In terms of tissue distribution, detected at low levels in brain, cerebral cortex, uterus and small intestine.

It localises to the golgi apparatus. The protein localises to the golgi stack membrane. It carries out the reaction 3-O-(beta-D-GlcA-(1-&gt;3)-beta-D-GalNAc-(1-&gt;4)-beta-D-GlcA-(1-&gt;3)-beta-D-Gal-(1-&gt;3)-beta-D-Gal-(1-&gt;4)-beta-D-Xyl)-L-seryl-[protein] + UDP-N-acetyl-alpha-D-galactosamine = 3-O-(beta-D-GalNAc-(1-&gt;4)-beta-D-GlcA-(1-&gt;3)-beta-D-GalNAc-(1-&gt;4)-beta-D-GlcA-(1-&gt;3)-beta-D-Gal-(1-&gt;3)-beta-D-Gal-(1-&gt;4)-beta-D-Xyl)-L-seryl-[protein] + UDP + H(+). It catalyses the reaction 3-O-{beta-D-GlcA-(1-&gt;3)-[beta-D-GalNAc-(1-&gt;4)-beta-D-GlcA-(1-&gt;3)](n)-beta-D-GalNAc-(1-&gt;4)-beta-D-GlcA-(1-&gt;3)-beta-D-Gal-(1-&gt;3)-beta-D-Gal-(1-&gt;4)-beta-D-Xyl}-L-seryl-[protein] + UDP-N-acetyl-alpha-D-galactosamine = 3-O-{[beta-D-GalNAc-(1-&gt;4)-beta-D-GlcA-(1-&gt;3)](n+1)-beta-D-GalNAc-(1-&gt;4)-beta-D-GlcA-(1-&gt;3)-beta-D-Gal-(1-&gt;3)-beta-D-Gal-(1-&gt;4)-beta-D-Xyl}-L-seryl-[protein] + UDP + H(+). The enzyme catalyses 3-O-(beta-D-GalNAc-(1-&gt;4)-beta-D-GlcA-(1-&gt;3)-beta-D-Gal-(1-&gt;3)-beta-D-Gal-(1-&gt;4)-beta-D-Xyl)-L-seryl-[protein] + UDP-alpha-D-glucuronate = 3-O-(beta-D-GlcA-(1-&gt;3)-beta-D-GalNAc-(1-&gt;4)-beta-D-GlcA-(1-&gt;3)-beta-D-Gal-(1-&gt;3)-beta-D-Gal-(1-&gt;4)-beta-D-Xyl)-L-seryl-[protein] + UDP + H(+). The catalysed reaction is 3-O-{[beta-D-GalNAc-(1-&gt;4)-beta-D-GlcA-(1-&gt;3)](n)-beta-D-GalNAc-(1-&gt;4)-beta-D-GlcA-(1-&gt;3)-beta-D-Gal-(1-&gt;3)-beta-D-Gal-(1-&gt;4)-beta-D-Xyl}-L-seryl-[protein] + UDP-alpha-D-glucuronate = 3-O-{beta-D-GlcA-(1-&gt;3)-[beta-D-GalNAc-(1-&gt;4)-beta-D-GlcA-(1-&gt;3)](n)-beta-D-GalNAc-(1-&gt;4)-beta-D-GlcA-(1-&gt;3)-beta-D-Gal-(1-&gt;3)-beta-D-Gal-(1-&gt;4)-beta-D-Xyl}-L-seryl-[protein] + UDP + H(+). In terms of biological role, has both beta-1,3-glucuronic acid and beta-1,4-N-acetylgalactosamine transferase activity. Transfers glucuronic acid (GlcUA) from UDP-GlcUA and N-acetylgalactosamine (GalNAc) from UDP-GalNAc to the non-reducing end of the elongating chondroitin polymer. Specific activity is much reduced compared to CHSY1. This is Chondroitin sulfate synthase 3 (CHSY3) from Homo sapiens (Human).